We begin with the raw amino-acid sequence, 82 residues long: Small ribosomal subunit protein uS17 (82 aa).

It belongs to the universal ribosomal protein uS17 family. Part of the 30S ribosomal subunit.

In terms of biological role, one of the primary rRNA binding proteins, it binds specifically to the 5'-end of 16S ribosomal RNA. This is Small ribosomal subunit protein uS17 from Shewanella pealeana (strain ATCC 700345 / ANG-SQ1).